The sequence spans 452 residues: Interferon-induced protein 44-like (452 aa).

The TLDc domain maps to 1 to 159 (MEVTTRLTWN…YLECEVFRVE (159 aa)).

It belongs to the IFI44 family. Interacts with FKBP5; this interaction modulates IKBKB and IKBKE kinase activities.

Its subcellular location is the cytoplasm. Its function is as follows. Type I interferon-stimulated gene (ISG) that plays a critical role in antiviral and antibacterial activity. During bacterial infection, promotes macrophage differentiation and facilitates inflammatory cytokine secretion. Plays a role in the control of respiratory syncytial virus/RSV infection, reducing the ability of the virus to replicate. Exhibits a low antiviral activity against hepatitis C virus. Also acts as a feedback regulator of IFN responses by negatively regulating IKBKB and IKBKE kinase activities through interaction with FKBP5. The protein is Interferon-induced protein 44-like (IFI44L) of Homo sapiens (Human).